The sequence spans 410 residues: Peptidase T (410 aa).

Histidine 79 is a Zn(2+) binding site. The active site involves aspartate 81. Aspartate 142 is a binding site for Zn(2+). The active-site Proton acceptor is the glutamate 176. Residues glutamate 177, aspartate 199, and histidine 381 each contribute to the Zn(2+) site.

This sequence belongs to the peptidase M20B family. The cofactor is Zn(2+).

The protein resides in the cytoplasm. The catalysed reaction is Release of the N-terminal residue from a tripeptide.. Functionally, cleaves the N-terminal amino acid of tripeptides. In Listeria monocytogenes serotype 4b (strain F2365), this protein is Peptidase T.